Consider the following 696-residue polypeptide: Polyribonucleotide nucleotidyltransferase (696 aa).

The Mg(2+) site is built by Asp483 and Asp489. A KH domain is found at 550 to 609 (PRITTIWVKVDKIRDVIGSGGKNIRSVTEATGVSIDIDDTGKINIASTNKEACDLAIKMI). The region spanning 619 to 687 (GKLYMGTVKK…KQGKIKLSRK (69 aa)) is the S1 motif domain.

It belongs to the polyribonucleotide nucleotidyltransferase family. The cofactor is Mg(2+).

The protein localises to the cytoplasm. It carries out the reaction RNA(n+1) + phosphate = RNA(n) + a ribonucleoside 5'-diphosphate. Its function is as follows. Involved in mRNA degradation. Catalyzes the phosphorolysis of single-stranded polyribonucleotides processively in the 3'- to 5'-direction. This chain is Polyribonucleotide nucleotidyltransferase, found in Citrifermentans bemidjiense (strain ATCC BAA-1014 / DSM 16622 / JCM 12645 / Bem) (Geobacter bemidjiensis).